A 109-amino-acid polypeptide reads, in one-letter code: Trafficking protein particle complex subunit 2-like protein (109 aa).

The protein belongs to the TRAPP small subunits family. Sedlin subfamily. In terms of assembly, component of the multisubunit TRAPP (transport protein particle) complex, which includes at least TRAPPC2, TRAPPC2L, TRAPPC3, TRAPPC3L, TRAPPC4, TRAPPC5, TRAPPC8, TRAPPC9, TRAPPC10, TRAPPC11 and TRAPPC12. Interacts with the heterodimer TRAPPC3-TRAPPC6A.

The protein localises to the cytoplasm. It is found in the perinuclear region. It localises to the endoplasmic reticulum. The protein resides in the golgi apparatus. In terms of biological role, may play a role in vesicular transport from endoplasmic reticulum to Golgi. The protein is Trafficking protein particle complex subunit 2-like protein (TRAPPC2L) of Pongo abelii (Sumatran orangutan).